We begin with the raw amino-acid sequence, 378 residues long: Erythronate-4-phosphate dehydrogenase (378 aa).

The substrate site is built by serine 45 and threonine 66. Residues aspartate 146 and threonine 175 each coordinate NAD(+). Arginine 208 is an active-site residue. Aspartate 232 contacts NAD(+). Glutamate 237 is a catalytic residue. The active-site Proton donor is the histidine 254. Residue glycine 257 coordinates NAD(+). Residue tyrosine 258 coordinates substrate.

Belongs to the D-isomer specific 2-hydroxyacid dehydrogenase family. PdxB subfamily. As to quaternary structure, homodimer.

Its subcellular location is the cytoplasm. The catalysed reaction is 4-phospho-D-erythronate + NAD(+) = (R)-3-hydroxy-2-oxo-4-phosphooxybutanoate + NADH + H(+). The protein operates within cofactor biosynthesis; pyridoxine 5'-phosphate biosynthesis; pyridoxine 5'-phosphate from D-erythrose 4-phosphate: step 2/5. Functionally, catalyzes the oxidation of erythronate-4-phosphate to 3-hydroxy-2-oxo-4-phosphonooxybutanoate. The chain is Erythronate-4-phosphate dehydrogenase from Salmonella arizonae (strain ATCC BAA-731 / CDC346-86 / RSK2980).